The chain runs to 270 residues: Monofunctional glycosyltransferase (270 aa).

A disordered region spans residues 1-35; sequence MKRSDRYKTYNKPNDSNDSNQLHHNTYFKPVNKPQ. Residues 11-24 show a composition bias toward polar residues; it reads NKPNDSNDSNQLHH. A helical transmembrane segment spans residues 47–67; the sequence is LLIPILIIIGIIIGVMYALSL.

The protein belongs to the glycosyltransferase 51 family.

The protein localises to the cell membrane. The catalysed reaction is [GlcNAc-(1-&gt;4)-Mur2Ac(oyl-L-Ala-gamma-D-Glu-L-Lys-D-Ala-D-Ala)](n)-di-trans,octa-cis-undecaprenyl diphosphate + beta-D-GlcNAc-(1-&gt;4)-Mur2Ac(oyl-L-Ala-gamma-D-Glu-L-Lys-D-Ala-D-Ala)-di-trans,octa-cis-undecaprenyl diphosphate = [GlcNAc-(1-&gt;4)-Mur2Ac(oyl-L-Ala-gamma-D-Glu-L-Lys-D-Ala-D-Ala)](n+1)-di-trans,octa-cis-undecaprenyl diphosphate + di-trans,octa-cis-undecaprenyl diphosphate + H(+). It functions in the pathway cell wall biogenesis; peptidoglycan biosynthesis. Peptidoglycan polymerase that catalyzes glycan chain elongation using lipid-linked disaccharide-pentapeptide as the substrate. The sequence is that of Monofunctional glycosyltransferase from Staphylococcus saprophyticus subsp. saprophyticus (strain ATCC 15305 / DSM 20229 / NCIMB 8711 / NCTC 7292 / S-41).